Here is a 192-residue protein sequence, read N- to C-terminus: MKIGILALQGAFAEHAQMLEKLGIESVELRNLKNFQQHYSDLSGLILPGGESTAIGKLLRELYMLEPIKQAISSGFPVFGTCAGLILLAKEITSQKESHFGTMDIVVERNAYGRQLGSFYTEADCKGVGKIPMTFIRGPIISSVGKKVNILATVNNKIVAAQEKNMLVTSFHPELTNNLSLHKYFIDICKVA.

50-52 (GES) is a binding site for L-glutamine. The active-site Nucleophile is the C82. L-glutamine contacts are provided by residues R109 and 136–137 (IR). Catalysis depends on charge relay system residues H172 and E174.

Belongs to the glutaminase PdxT/SNO family. In the presence of PdxS, forms a dodecamer of heterodimers. Only shows activity in the heterodimer.

It catalyses the reaction aldehydo-D-ribose 5-phosphate + D-glyceraldehyde 3-phosphate + L-glutamine = pyridoxal 5'-phosphate + L-glutamate + phosphate + 3 H2O + H(+). The catalysed reaction is L-glutamine + H2O = L-glutamate + NH4(+). Its pathway is cofactor biosynthesis; pyridoxal 5'-phosphate biosynthesis. Functionally, catalyzes the hydrolysis of glutamine to glutamate and ammonia as part of the biosynthesis of pyridoxal 5'-phosphate. The resulting ammonia molecule is channeled to the active site of PdxS. The chain is Pyridoxal 5'-phosphate synthase subunit PdxT from Haemophilus influenzae (strain PittGG).